The chain runs to 322 residues: N-acetyl-gamma-glutamyl-phosphate reductase (322 aa).

The active site involves C132.

This sequence belongs to the NAGSA dehydrogenase family. Type 1 subfamily.

It is found in the cytoplasm. The catalysed reaction is N-acetyl-L-glutamate 5-semialdehyde + phosphate + NADP(+) = N-acetyl-L-glutamyl 5-phosphate + NADPH + H(+). It functions in the pathway amino-acid biosynthesis; L-arginine biosynthesis; N(2)-acetyl-L-ornithine from L-glutamate: step 3/4. In terms of biological role, catalyzes the NADPH-dependent reduction of N-acetyl-5-glutamyl phosphate to yield N-acetyl-L-glutamate 5-semialdehyde. This Bacteroides fragilis (strain YCH46) protein is N-acetyl-gamma-glutamyl-phosphate reductase.